Here is a 657-residue protein sequence, read N- to C-terminus: 1-deoxy-D-xylulose-5-phosphate synthase (657 aa).

Residues histidine 73 and 113-115 contribute to the thiamine diphosphate site; that span reads SHA. Aspartate 145 lines the Mg(2+) pocket. Thiamine diphosphate is bound by residues 146-147, asparagine 175, tyrosine 293, and glutamate 375; that span reads GA. Position 175 (asparagine 175) interacts with Mg(2+).

The protein belongs to the transketolase family. DXPS subfamily. In terms of assembly, homodimer. It depends on Mg(2+) as a cofactor. Requires thiamine diphosphate as cofactor.

The catalysed reaction is D-glyceraldehyde 3-phosphate + pyruvate + H(+) = 1-deoxy-D-xylulose 5-phosphate + CO2. It functions in the pathway metabolic intermediate biosynthesis; 1-deoxy-D-xylulose 5-phosphate biosynthesis; 1-deoxy-D-xylulose 5-phosphate from D-glyceraldehyde 3-phosphate and pyruvate: step 1/1. Catalyzes the acyloin condensation reaction between C atoms 2 and 3 of pyruvate and glyceraldehyde 3-phosphate to yield 1-deoxy-D-xylulose-5-phosphate (DXP). The polypeptide is 1-deoxy-D-xylulose-5-phosphate synthase (Renibacterium salmoninarum (strain ATCC 33209 / DSM 20767 / JCM 11484 / NBRC 15589 / NCIMB 2235)).